The sequence spans 290 residues: Elongation factor Ts (290 aa).

The tract at residues Thr79–Val82 is involved in Mg(2+) ion dislocation from EF-Tu.

Belongs to the EF-Ts family.

The protein localises to the cytoplasm. In terms of biological role, associates with the EF-Tu.GDP complex and induces the exchange of GDP to GTP. It remains bound to the aminoacyl-tRNA.EF-Tu.GTP complex up to the GTP hydrolysis stage on the ribosome. This chain is Elongation factor Ts, found in Pseudoalteromonas atlantica (strain T6c / ATCC BAA-1087).